Consider the following 2451-residue polypeptide: Reducing polyketide synthase 8 (2451 aa).

The Ketosynthase family 3 (KS3) domain maps to 12 to 434 (NEPIAIVGSS…GTNAHAILEA (423 aa)). Catalysis depends on for beta-ketoacyl synthase activity residues C174, H313, and H354. In terms of domain architecture, Malonyl-CoA:ACP transacylase (MAT) spans 538–846 (VFTGQGAQWA…GPATETINNM (309 aa)). The tract at residues 940-1085 (HQLLGSASTF…GFLRIELGAP (146 aa)) is N-terminal hotdog fold. Positions 940 to 1254 (HQLLGSASTF…LLNLPGSLRS (315 aa)) constitute a PKS/mFAS DH domain. The Proton acceptor; for dehydratase activity role is filled by H974. The interval 1100–1254 (LIPLDVEELY…LLNLPGSLRS (155 aa)) is C-terminal hotdog fold. Catalysis depends on D1160, which acts as the Proton donor; for dehydratase activity. Residues 1294–1590 (LVLFYCQKVL…QHFCSVMLSQ (297 aa)) are methyltransfrase (MT) domain. The 179-residue stretch at 2088–2266 (TYLLLGLAGD…PGCVVHIGGV (179 aa)) folds into the Ketoreductase (KR) domain. The 86-residue stretch at 2366–2451 (DACLDLLLGG…LAIWRKQVKA (86 aa)) folds into the Carrier domain. S2404 carries the post-translational modification O-(pantetheine 4'-phosphoryl)serine.

Pantetheine 4'-phosphate serves as cofactor.

It functions in the pathway secondary metabolite biosynthesis. Reducing polyketide synthase; part of the gene cluster that mediates the biosynthesis of fusamarins, isocoumarin derivatives that show moderate cytotoxicity with IC(50) values between 1 and 50 uM. The polyketide synthase FMN1 probably synthesizes two different polyketides, a tetra- and a pentaketide, containinga varying number of double bonds depending on the selective actions of the trans-enoyl reductase FMN2. Chain fusion will presumably be mediated by the KS domain before finally offloading is catalyzed by the alpha/beta hydrolase fold enzyme FMN3. This Fusarium mangiferae (Mango malformation disease fungus) protein is Reducing polyketide synthase 8.